A 229-amino-acid polypeptide reads, in one-letter code: Transmembrane 4 L6 family member 20 (229 aa).

Residues 1-14 (MTCCEGWTSCNGFS) lie on the Lumenal side of the membrane. Residues 15 to 35 (LLVLLLLGVVLNAIPLIVSLV) traverse the membrane as a helical segment. The Cytoplasmic segment spans residues 36-44 (EEDQFSQNP). A helical membrane pass occupies residues 45–65 (ISCFEWWFPGIIGAGLMAIPA). Residues 66-83 (TTMSLTARKRACCNNRTG) are Lumenal-facing. The helical transmembrane segment at 84–104 (MFLSSLFSVITVIGALYCMLI) threads the bilayer. Over 105–185 (SIQALLKGPL…HFDSEENKHR (81 aa)) the chain is Cytoplasmic. The helical transmembrane segment at 186-206 (LIHFSVFLGLLLVGILEVLFG) threads the bilayer. Topologically, residues 207–229 (LSQIVIGFLGCLCGVSKRRSQIV) are lumenal.

Belongs to the L6 tetraspanin family. In terms of processing, glycosylated at Asn-132, Asn-148 and Asn-163 in presence of ceramide which inverts the orientation of TM4SF20 in membranes exposing these residues to the endoplasmic reticulum lumen. Post-translationally, cleaved by signal peptidase at Ser-14 but the peptide does not act as a signal peptide. Cleavage is inhibited by ceramide which inverts the orientation of TM4SF20 in membranes exposing the N-terminus to the cytosol and not to the endoplasmic reticulum lumen. As to expression, expressed in the brain, with high levels in the parietal lobe, hippocampus, pons, white matter and cerebellum.

It localises to the membrane. The protein localises to the endoplasmic reticulum membrane. Functionally, polytopic transmembrane protein that inhibits regulated intramembrane proteolysis (RIP) of CREB3L1, inhibiting its activation and the induction of collagen synthesis. In response to ceramide, which alters TM4SF20 membrane topology, stimulates RIP activation of CREB3L1. Ceramide reverses the direction through which transmembrane helices are translocated into the endoplasmic reticulum membrane during translation of TM4SF20, this mechanism is called 'regulated alternative translocation' (RAT) and regulates the function of the transmembrane protein. In Homo sapiens (Human), this protein is Transmembrane 4 L6 family member 20 (TM4SF20).